A 184-amino-acid chain; its full sequence is ADP-ribosylation factor-like protein 2 (184 aa).

A lipid anchor (N-myristoyl glycine) is attached at G2. Residues 23-30 (GLDNAGKT), 66-70 (DVGGQ), G68, and 125-128 (NKSD) each bind GTP.

It belongs to the small GTPase superfamily. Arf family. As to expression, in the embryo, strongly expressed in migrating hypodermal cells. Shortly before the beginning of elongation, expressed in many developing neurons where it persists throughout adulthood. In the larva, highly expressed in migrating hypodermal cells and the uterus. Also expressed in vulva, spermatheca, sheath cells, distal tips cells and proctoderm of the male tail.

It localises to the cytoplasm. The protein localises to the cell membrane. The protein resides in the cytoskeleton. Its subcellular location is the microtubule organizing center. It is found in the centrosome. Its function is as follows. GTP-binding protein that functions in embryogenesis, cytokinesis, germline development and microtubulule cytoskeleton dynamics. This chain is ADP-ribosylation factor-like protein 2 (evl-20), found in Caenorhabditis elegans.